The primary structure comprises 867 residues: Replication origin-binding protein (867 aa).

The segment at 1–39 (MNVATCTHQTHHAARAPGATSAPGAASGDPLGARRPIGD) is disordered. Low complexity predominate over residues 15–28 (RAPGATSAPGAASG). The Helicase ATP-binding domain occupies 86-251 (ASAPTARCVT…CSLRGEKNVH (166 aa)). Residue 99-106 (APMGSGKT) participates in ATP binding.

The protein belongs to the herpesviridae OriBP family. In terms of assembly, homodimer. Interacts with the major DNA-binding protein ICP8. Interacts with the helicase/primase component UL8 and the polymerase accessory protein UL42.

It localises to the host nucleus. Functions as a docking protein to recruit essential components of the viral replication machinery to viral DNA origins. In the presence of the major DNA-binding protein, opens dsDNA leading to a conformational change in the origin that facilitates DNA unwinding and subsequent replication. The polypeptide is Replication origin-binding protein (Human herpesvirus 2 (strain HG52) (HHV-2)).